The sequence spans 537 residues: Membrane protein insertase YidC (537 aa).

Helical transmembrane passes span 5–25 (LIIA…IFPT), 353–373 (GNYG…FFPL), 418–438 (VNPL…FGLY), and 495–515 (MLML…GLVI).

It belongs to the OXA1/ALB3/YidC family. Type 1 subfamily. Interacts with the Sec translocase complex via SecD. Specifically interacts with transmembrane segments of nascent integral membrane proteins during membrane integration.

The protein localises to the cell inner membrane. Its function is as follows. Required for the insertion and/or proper folding and/or complex formation of integral membrane proteins into the membrane. Involved in integration of membrane proteins that insert both dependently and independently of the Sec translocase complex, as well as at least some lipoproteins. Aids folding of multispanning membrane proteins. This is Membrane protein insertase YidC from Citrifermentans bemidjiense (strain ATCC BAA-1014 / DSM 16622 / JCM 12645 / Bem) (Geobacter bemidjiensis).